The primary structure comprises 103 residues: Small ribosomal subunit protein uS10 (103 aa).

This sequence belongs to the universal ribosomal protein uS10 family. As to quaternary structure, part of the 30S ribosomal subunit.

In terms of biological role, involved in the binding of tRNA to the ribosomes. The sequence is that of Small ribosomal subunit protein uS10 from Thioalkalivibrio sulfidiphilus (strain HL-EbGR7).